The sequence spans 358 residues: Naringenin,2-oxoglutarate 3-dioxygenase (358 aa).

Positions 190-294 (CVDMDQKIVV…RLSIATFQNP (105 aa)) constitute a Fe2OG dioxygenase domain. Fe cation is bound by residues His217, Asp219, and His275. Arg285 lines the 2-oxoglutarate pocket.

This sequence belongs to the iron/ascorbate-dependent oxidoreductase family. As to quaternary structure, interacts with Dihydroflavonol-4-reductase (TT3), chalcone synthase (TT4) and chalcone isomerase (TT5) to form a flavonoid enzyme complex. Fe(2+) is required as a cofactor. L-ascorbate serves as cofactor.

It carries out the reaction a (2S)-flavan-4-one + 2-oxoglutarate + O2 = a (2R,3R)-dihydroflavonol + succinate + CO2. It functions in the pathway secondary metabolite biosynthesis; flavonoid biosynthesis. In terms of biological role, catalyzes the 3-beta-hydroxylation of 2S-flavanones to 2R,3R-dihydroflavonols which are intermediates in the biosynthesis of flavonols, anthocyanidins, catechins and proanthocyanidins in plants. The polypeptide is Naringenin,2-oxoglutarate 3-dioxygenase (F3H) (Arabidopsis thaliana (Mouse-ear cress)).